We begin with the raw amino-acid sequence, 466 residues long: Histone acetyltransferase type B catalytic subunit DDB_G0275159 (466 aa).

The N-acetyltransferase domain maps to 169–366 (AVFRYHEKLQ…FRIAIKKRLY (198 aa)). Acetyl-CoA is bound by residues 240 to 242 (YLI) and 247 to 253 (QRMGHGK). The active-site Proton donor/acceptor is E279. Residues 372-459 (DSEQIEKMKQ…LEENYHKTLS (88 aa)) are a coiled coil.

This sequence belongs to the HAT1 family.

It catalyses the reaction L-lysyl-[protein] + acetyl-CoA = N(6)-acetyl-L-lysyl-[protein] + CoA + H(+). The sequence is that of Histone acetyltransferase type B catalytic subunit DDB_G0275159 from Dictyostelium discoideum (Social amoeba).